The primary structure comprises 389 residues: MSENTFPGRLGINPFGPESRAANTEKPSTSHIVRVTERDEDKVNPTFNNKPLKKFAGDRATNTPLQAFKLGASDGFPEHYGMGRRTSVSAESLNPNPTASSNESWTPPYHRKTPEQLERLKKSISGNFLFNHLDDEQSAQVLGALVEKPIPVKDIKVISQGDQGDFFYVVEKGSFDVYVNPAGSVQPGLGGLGNKVATIEPGGSFGELALMYNAPRAATVISAEGSCTLWSLDRITFRRILMDSTFKCRRLYESFLEEVTLLSTLTKYERSKIADALVTLKYPAGTTIKEGDVGEEFYLLESGEAEAFKAGCQNAVKCYSKGDYFGELALLNDAPRAASVVSKTEVKVAKLGKDGFQRLLGPVESIMRRTKYEGVEEIDREFPGSAAAL.

2 disordered regions span residues 1–57 (MSEN…KFAG) and 87–110 (SVSAESLNPNPTASSNESWTPPYH). The tract at residues 1-128 (MSENTFPGRL…RLKKSISGNF (128 aa)) is dimerization and phosphorylation. The span at 21 to 31 (AANTEKPSTSH) shows a compositional bias: polar residues. The span at 34 to 43 (RVTERDEDKV) shows a compositional bias: basic and acidic residues. Residue Ser87 is modified to Phosphoserine. Residues 87 to 105 (SVSAESLNPNPTASSNESW) are compositionally biased toward polar residues. Residues 129–258 (LFNH…FLEE), Glu207, Arg216, 261–377 (LLST…GVEE), Glu327, and Arg336 each bind 3',5'-cyclic AMP.

The protein belongs to the cAMP-dependent kinase regulatory chain family. In terms of assembly, tetramer, composed of 2 regulatory (R) and 2 catalytic (C) subunits. In the presence of cAMP it dissociates into 2 active monomeric C subunits and an R dimer.

The protein is cAMP-dependent protein kinase regulatory subunit (pkar) of Blumeria graminis (Powdery mildew).